A 241-amino-acid chain; its full sequence is Gamma-interferon-inducible lysosomal thiol reductase-like protein (241 aa).

A signal peptide spans 1-18 (MLFKSLLLLSVYAVTCYG). 2 N-linked (GlcNAc...) asparagine glycosylation sites follow: Asn-105 and Asn-152. A helical transmembrane segment spans residues 218 to 235 (STGSAISSLGMIVTVVAV).

It belongs to the GILT family. Salivary gland (at protein level). Low-level expression in midgut (at protein level). Expressed in head and leg tissues. Ovary. Fat body. In terms of tissue distribution, (Microbial infection) Detected with Plasmodium berghei sporozoites isolated from the saliva of infected Anopheles gambiae mosquitoes (at protein level).

Its subcellular location is the membrane. Required for normal development of ovary and testis. Functionally, (Microbial infection) Interacts with the surface of Plasmodium berghei sporozoites. Reduces P.berghei sporozoite cell traversal activity and transmission. Limits the motility of P.berghei sporozoites. Decreases the levels of host liver infection by P.berghei sporozoites. Does not affect P.berghei sporozoite viability. Indirectly promotes P.berghei survival in mosquitoes by influencing ovarian development and the subsequent production of 20-hydroxyecdysone and vitellogenin, which, in turn, modulates TEP1-dependent parasite killing. Promotes P.berghei infection in mosquitoes, most likely impacting the oocyst stage of parasite development. Its function is as follows. (Microbial infection) Promotes Plasmodium falciparum survival in mosquitoes. This Anopheles gambiae (African malaria mosquito) protein is Gamma-interferon-inducible lysosomal thiol reductase-like protein.